The chain runs to 297 residues: Succinate dehydrogenase [ubiquinone] iron-sulfur subunit, mitochondrial (297 aa).

The interval 33–55 (TAEALSASRPPIKETKTSTVKEP) is disordered. Residues 78–157 (DKPRMQSYTL…ETRIYPLPHT (80 aa)) form the 2Fe-2S ferredoxin-type domain. Residues Cys-117, Cys-122, Cys-125, and Cys-137 each coordinate [2Fe-2S] cluster. In terms of domain architecture, 4Fe-4S ferredoxin-type spans 199-229 (DRKKLDGLYECILCACCSTSCPSYWWNSEEY). Positions 209, 212, and 215 each coordinate [4Fe-4S] cluster. Cys-219 serves as a coordination point for [3Fe-4S] cluster. Trp-224 contacts a ubiquinone. Residues Cys-266 and Cys-272 each contribute to the [3Fe-4S] cluster site. Position 276 (Cys-276) interacts with [4Fe-4S] cluster.

Belongs to the succinate dehydrogenase/fumarate reductase iron-sulfur protein family. Component of complex II composed of four subunits: a flavoprotein (FP), an iron-sulfur protein (IP), and a cytochrome b composed of a large and a small subunit. [2Fe-2S] cluster serves as cofactor. Requires [3Fe-4S] cluster as cofactor. It depends on [4Fe-4S] cluster as a cofactor.

It localises to the mitochondrion inner membrane. The enzyme catalyses a quinone + succinate = fumarate + a quinol. It functions in the pathway carbohydrate metabolism; tricarboxylic acid cycle; fumarate from succinate (eukaryal route): step 1/1. Iron-sulfur protein (IP) subunit of succinate dehydrogenase (SDH) that is involved in complex II of the mitochondrial electron transport chain and is responsible for transferring electrons from succinate to ubiquinone (coenzyme Q). In Zymoseptoria tritici (Speckled leaf blotch fungus), this protein is Succinate dehydrogenase [ubiquinone] iron-sulfur subunit, mitochondrial (SDH2).